The following is a 141-amino-acid chain: Large-conductance mechanosensitive channel (141 aa).

The next 3 membrane-spanning stretches (helical) occupy residues 8 to 28 (FALKGNVVDLAIGVIIGAAFG), 38 to 58 (IIMPFFGALGGLDFSNYFFPL), and 80 to 100 (GNFLTVAVNFLIIAFVLFLIV).

Belongs to the MscL family. In terms of assembly, homopentamer.

It localises to the cell inner membrane. Functionally, channel that opens in response to stretch forces in the membrane lipid bilayer. May participate in the regulation of osmotic pressure changes within the cell. This Beijerinckia indica subsp. indica (strain ATCC 9039 / DSM 1715 / NCIMB 8712) protein is Large-conductance mechanosensitive channel.